A 466-amino-acid polypeptide reads, in one-letter code: Cocosin 1 (466 aa).

The signal sequence occupies residues 1-22; that stretch reads MGSSSLLSFSLCLLLLCHLSQA. Cystine bridges form between Cys-45–Cys-78 and Cys-121–Cys-288. Cupin type-1 domains follow at residues 50-242 and 294-443; these read LNAL…ELAR and QNIG…DEAR.

This sequence belongs to the 11S seed storage protein (globulins) family. In terms of assembly, hexamer; each subunit is composed of an acidic and a basic chain derived from a single precursor and linked by a disulfide bond. Endosperm of the seeds.

Functionally, seed storage protein. In Cocos nucifera (Coconut palm), this protein is Cocosin 1.